Consider the following 476-residue polypeptide: Glutamate--tRNA ligase (476 aa).

The short motif at 9–19 (PSPTGLFHIGT) is the 'HIGH' region element. The 'KMSKS' region motif lies at 248–252 (KLSKR). Residue Lys-251 coordinates ATP.

This sequence belongs to the class-I aminoacyl-tRNA synthetase family. Glutamate--tRNA ligase type 1 subfamily. Monomer.

It localises to the cytoplasm. The catalysed reaction is tRNA(Glu) + L-glutamate + ATP = L-glutamyl-tRNA(Glu) + AMP + diphosphate. Functionally, catalyzes the attachment of glutamate to tRNA(Glu) in a two-step reaction: glutamate is first activated by ATP to form Glu-AMP and then transferred to the acceptor end of tRNA(Glu). The protein is Glutamate--tRNA ligase of Prochlorococcus marinus (strain MIT 9301).